We begin with the raw amino-acid sequence, 446 residues long: Trigger factor (446 aa).

One can recognise a PPIase FKBP-type domain in the interval 182–267 (GDKVVVDYQN…VKNIFMMKAI (86 aa)).

Belongs to the FKBP-type PPIase family. Tig subfamily.

It is found in the cytoplasm. The catalysed reaction is [protein]-peptidylproline (omega=180) = [protein]-peptidylproline (omega=0). In terms of biological role, involved in protein export. Acts as a chaperone by maintaining the newly synthesized protein in an open conformation. Functions as a peptidyl-prolyl cis-trans isomerase. This Ehrlichia ruminantium (strain Gardel) protein is Trigger factor.